The following is a 310-amino-acid chain: Putative dihydroorotate dehydrogenase A (fumarate) (310 aa).

Substrate contacts are provided by residues lysine 45, 69–73 (NSMGL), and asparagine 128. Position 45–46 (45–46 (KT)) interacts with FMN. Asparagine 128 serves as a coordination point for FMN. Residue cysteine 131 is the Nucleophile of the active site. FMN is bound by residues lysine 165 and valine 193. 194 to 195 (NS) contacts substrate. FMN is bound by residues glycine 220, 248–249 (GG), and 270–271 (GT).

This sequence belongs to the dihydroorotate dehydrogenase family. Type 1 subfamily. Homodimer. It depends on FMN as a cofactor.

It localises to the cytoplasm. The catalysed reaction is (S)-dihydroorotate + fumarate = orotate + succinate. It participates in pyrimidine metabolism; UMP biosynthesis via de novo pathway. In terms of biological role, catalyzes the conversion of dihydroorotate to orotate with fumarate as the electron acceptor. This Streptococcus agalactiae serotype Ia (strain ATCC 27591 / A909 / CDC SS700) protein is Putative dihydroorotate dehydrogenase A (fumarate) (pyrD).